We begin with the raw amino-acid sequence, 320 residues long: Formimidoylglutamase (320 aa).

Mn(2+)-binding residues include His125, Asp153, His155, Asp157, Asp244, and Asp246.

This sequence belongs to the arginase family. Mn(2+) serves as cofactor.

The enzyme catalyses N-formimidoyl-L-glutamate + H2O = formamide + L-glutamate. It functions in the pathway amino-acid degradation; L-histidine degradation into L-glutamate; L-glutamate from N-formimidoyl-L-glutamate (hydrolase route): step 1/1. Its function is as follows. Catalyzes the conversion of N-formimidoyl-L-glutamate to L-glutamate and formamide. The protein is Formimidoylglutamase of Rhodococcus jostii (strain RHA1).